The sequence spans 391 residues: Processive diacylglycerol beta-glucosyltransferase (391 aa).

The protein belongs to the glycosyltransferase 28 family. UgtP subfamily.

The protein resides in the cell membrane. It catalyses the reaction a 1,2-diacyl-3-O-(beta-D-glucopyranosyl)-sn-glycerol + UDP-alpha-D-glucose = a 1,2-diacyl-3-O-(beta-D-Glc-(1-&gt;6)-beta-D-Glc)-sn-glycerol + UDP + H(+). The enzyme catalyses a 1,2-diacyl-sn-glycerol + UDP-alpha-D-glucose = a 1,2-diacyl-3-O-(beta-D-glucopyranosyl)-sn-glycerol + UDP + H(+). It participates in glycolipid metabolism; diglucosyl-diacylglycerol biosynthesis. In terms of biological role, processive glucosyltransferase involved in the biosynthesis of both the bilayer- and non-bilayer-forming membrane glucolipids. Is able to successively transfer two glucosyl residues to diacylglycerol (DAG), thereby catalyzing the formation of beta-monoglucosyl-DAG (3-O-(beta-D-glucopyranosyl)-1,2-diacyl-sn-glycerol) and beta-diglucosyl-DAG (3-O-(beta-D-glucopyranosyl-beta-(1-&gt;6)-D-glucopyranosyl)-1,2-diacyl-sn-glycerol). Beta-diglucosyl-DAG is the predominant glycolipid found in Bacillales and is also used as a membrane anchor for lipoteichoic acid (LTA). The protein is Processive diacylglycerol beta-glucosyltransferase of Staphylococcus aureus (strain MW2).